The primary structure comprises 338 residues: Ketol-acid reductoisomerase (NADP(+)) (338 aa).

Residues 1–181 (MQVYYDKDCD…GGGRTGIIET (181 aa)) enclose the KARI N-terminal Rossmann domain. NADP(+)-binding positions include 24 to 27 (YGSQ), Arg47, Ser50, Ser52, and 82 to 85 (DEFQ). His107 is a catalytic residue. Gly133 contributes to the NADP(+) binding site. The KARI C-terminal knotted domain occupies 182–327 (TFKDETETDL…EKLRAMMPWI (146 aa)). The Mg(2+) site is built by Asp190, Glu194, Glu226, and Glu230. Position 251 (Ser251) interacts with substrate.

It belongs to the ketol-acid reductoisomerase family. Requires Mg(2+) as cofactor.

It carries out the reaction (2R)-2,3-dihydroxy-3-methylbutanoate + NADP(+) = (2S)-2-acetolactate + NADPH + H(+). It catalyses the reaction (2R,3R)-2,3-dihydroxy-3-methylpentanoate + NADP(+) = (S)-2-ethyl-2-hydroxy-3-oxobutanoate + NADPH + H(+). Its pathway is amino-acid biosynthesis; L-isoleucine biosynthesis; L-isoleucine from 2-oxobutanoate: step 2/4. The protein operates within amino-acid biosynthesis; L-valine biosynthesis; L-valine from pyruvate: step 2/4. Functionally, involved in the biosynthesis of branched-chain amino acids (BCAA). Catalyzes an alkyl-migration followed by a ketol-acid reduction of (S)-2-acetolactate (S2AL) to yield (R)-2,3-dihydroxy-isovalerate. In the isomerase reaction, S2AL is rearranged via a Mg-dependent methyl migration to produce 3-hydroxy-3-methyl-2-ketobutyrate (HMKB). In the reductase reaction, this 2-ketoacid undergoes a metal-dependent reduction by NADPH to yield (R)-2,3-dihydroxy-isovalerate. The chain is Ketol-acid reductoisomerase (NADP(+)) from Teredinibacter turnerae (strain ATCC 39867 / T7901).